A 226-amino-acid polypeptide reads, in one-letter code: UPF0502 protein azo0627 (226 aa).

The protein belongs to the UPF0502 family.

In Azoarcus sp. (strain BH72), this protein is UPF0502 protein azo0627.